The chain runs to 292 residues: Ribosomal protein L11 methyltransferase (292 aa).

S-adenosyl-L-methionine is bound by residues Thr144, Gly165, Asp187, and Asn229.

This sequence belongs to the methyltransferase superfamily. PrmA family.

It localises to the cytoplasm. It catalyses the reaction L-lysyl-[protein] + 3 S-adenosyl-L-methionine = N(6),N(6),N(6)-trimethyl-L-lysyl-[protein] + 3 S-adenosyl-L-homocysteine + 3 H(+). Methylates ribosomal protein L11. In Pseudomonas savastanoi pv. phaseolicola (strain 1448A / Race 6) (Pseudomonas syringae pv. phaseolicola (strain 1448A / Race 6)), this protein is Ribosomal protein L11 methyltransferase.